A 433-amino-acid polypeptide reads, in one-letter code: Trigger factor (433 aa).

A PPIase FKBP-type domain is found at 163 to 248 (GDVVVLDFAA…VHAVKERRLP (86 aa)).

This sequence belongs to the FKBP-type PPIase family. Tig subfamily.

It localises to the cytoplasm. The enzyme catalyses [protein]-peptidylproline (omega=180) = [protein]-peptidylproline (omega=0). Its function is as follows. Involved in protein export. Acts as a chaperone by maintaining the newly synthesized protein in an open conformation. Functions as a peptidyl-prolyl cis-trans isomerase. This is Trigger factor from Nitratidesulfovibrio vulgaris (strain ATCC 29579 / DSM 644 / CCUG 34227 / NCIMB 8303 / VKM B-1760 / Hildenborough) (Desulfovibrio vulgaris).